The primary structure comprises 302 residues: Acetylesterase (302 aa).

The signal sequence occupies residues 1–21 (MGRFLTTTALALLATGGAATA). N-linked (GlcNAc...) asparagine glycans are attached at residues asparagine 84 and asparagine 101.

This sequence belongs to the carbohydrate esterase CE16 family.

It is found in the secreted. It carries out the reaction an acetyl ester + H2O = an aliphatic alcohol + acetate + H(+). Its function is as follows. Acetyl esterase that acts as an exo-deacetylase. Liberates acetic acid from xylo-oligomers. The sequence is that of Acetylesterase from Thermothelomyces thermophilus (Myceliophthora thermophila).